A 145-amino-acid chain; its full sequence is Phospholipase A2 phospholipin (145 aa).

An N-terminal signal peptide occupies residues 1 to 15; it reads MVDLARRCSGSTEGR. 3 residues coordinate Ca(2+): Trp-24, Gly-26, and Gly-28. 5 disulfide bridges follow: Cys-25-Cys-46, Cys-45-Cys-84, Cys-52-Cys-77, Cys-75-Cys-116, and Cys-121-Cys-132. The active site involves His-49. Asp-50 contributes to the Ca(2+) binding site. The propeptide occupies 124-128; that stretch reads KRSGR.

This sequence belongs to the phospholipase A2 family. Group III subfamily. As to quaternary structure, heterodimer composed of a small subunit and a large subunit; disulfid-linked. Ca(2+) serves as cofactor. In terms of tissue distribution, expressed by the venom gland.

The protein resides in the secreted. The enzyme catalyses a 1,2-diacyl-sn-glycero-3-phosphocholine + H2O = a 1-acyl-sn-glycero-3-phosphocholine + a fatty acid + H(+). Its function is as follows. Scorpion venom phospholipase A2 (PLA2) that contains enzymatic activity, but does not inhibit ryanodine receptors in contrary to imperatoxin-1, another heterodimer of P.imperator venom. PLA2 catalyzes the calcium-dependent hydrolysis of the 2-acyl groups in 3-sn-phosphoglycerides. In Pandinus imperator (Emperor scorpion), this protein is Phospholipase A2 phospholipin.